Reading from the N-terminus, the 369-residue chain is MDPCKVNELRAFVKMCKQDPSVLHTEEMRFLREWVESMGGKVPPATQKAKSEENTKEEKPDSKKVEEDLKADEPSTEESDLEIDKEGVIEPDTDAPQEMGDENVEITEEMMDQANDKKVAAIEVLNDGELQKAIDLFTDAIKLNPRLAILYAKRASVFVKLQKPNAAIQDCDRAIEINPDSAQPYKWRGKAHRLLGHWEEAAHDLAFACKLDYDEDASAMLKEVQPRAQKIAEHWRKYERKHEEREIKERIERVKKAQEEQERAQREEEARRQSGAHYGPFPGGFPGGMPGNFPGGMPGMGGDMPGMAGMPGLNEILSDPEALAAMQDPEVMVAFQDVAQNPANMSKYQSNPKVMNLISKLSAKFGGQA.

Positions 38–98 (MGGKVPPATQ…IEPDTDAPQE (61 aa)) are disordered. Residues 49 to 73 (AKSEENTKEEKPDSKKVEEDLKADE) show a composition bias toward basic and acidic residues. Positions 89 to 98 (IEPDTDAPQE) are enriched in acidic residues. TPR repeat units follow at residues 114–147 (ANDK…NPRL), 149–181 (ILYA…NPDS), and 183–215 (QPYK…DYDE). Basic and acidic residues predominate over residues 256-272 (KAQEEQERAQREEEARR). A disordered region spans residues 256 to 300 (KAQEEQERAQREEEARRQSGAHYGPFPGGFPGGMPGNFPGGMPGM). A compositionally biased stretch (gly residues) spans 281–300 (FPGGFPGGMPGNFPGGMPGM). Residues 319–358 (DPEALAAMQDPEVMVAFQDVAQNPANMSKYQSNPKVMNLI) enclose the STI1 domain. A Phosphoserine modification is found at Ser-346. Lys-353 and Lys-360 each carry N6-acetyllysine.

Belongs to the FAM10 family.

It is found in the cytoplasm. This chain is Putative protein FAM10A5 (ST13P5), found in Homo sapiens (Human).